Reading from the N-terminus, the 276-residue chain is Energy-coupling factor transporter ATP-binding protein EcfA2 (276 aa).

The ABC transporter domain maps to 1-233 (MKTPFERLAL…GEEMAGWGLD (233 aa)). Residue 27-34 (GHTGSGKS) coordinates ATP. The active-site Proton acceptor is the Glu158.

Belongs to the ABC transporter superfamily. Energy-coupling factor EcfA family. As to quaternary structure, forms a stable energy-coupling factor (ECF) transporter complex composed of 2 membrane-embedded substrate-binding proteins (S component), 2 ATP-binding proteins (A component) and 2 transmembrane proteins (T component).

The protein resides in the cell membrane. Functionally, ATP-binding (A) component of a common energy-coupling factor (ECF) ABC-transporter complex. Unlike classic ABC transporters this ECF transporter provides the energy necessary to transport a number of different substrates. In Bacillus subtilis (strain 168), this protein is Energy-coupling factor transporter ATP-binding protein EcfA2.